Here is a 454-residue protein sequence, read N- to C-terminus: L-serine dehydratase 1 (454 aa).

The protein belongs to the iron-sulfur dependent L-serine dehydratase family. [4Fe-4S] cluster serves as cofactor. In terms of processing, activated by post-translational modification by a system involving at least three gene products. Activation is mimicked in vitro by iron and dithiothreitol. There is considerable evidence for a free-radical activation mechanism.

It carries out the reaction L-serine = pyruvate + NH4(+). It functions in the pathway carbohydrate biosynthesis; gluconeogenesis. Functionally, also deaminates threonine, particularly when it is present in high concentration. In Escherichia coli (strain K12), this protein is L-serine dehydratase 1 (sdaA).